The sequence spans 269 residues: 5'-nucleotidase SurE (269 aa).

Positions 11, 12, 43, and 101 each coordinate a divalent metal cation.

This sequence belongs to the SurE nucleotidase family. It depends on a divalent metal cation as a cofactor.

It localises to the cytoplasm. It catalyses the reaction a ribonucleoside 5'-phosphate + H2O = a ribonucleoside + phosphate. Functionally, nucleotidase that shows phosphatase activity on nucleoside 5'-monophosphates. This chain is 5'-nucleotidase SurE, found in Prochlorococcus marinus (strain MIT 9303).